The following is a 256-amino-acid chain: MRTPIVAANWKMHKTQPEARQFLADFLPREAGMSGVEIVICPPFTALAAVAGGLTGTRVGLGAQNMSDKPSGAFTGEVSGAMLVDAGCRYVILGHSERRRLFGESDEVVGAKVRAALQHGLIPILCIGETLEEQQAGEADAVNRRQLLAGLEGLTPEQVANLVIAYEPVWAIGTGRNCDPGDAQARIAAVRAVVAEAFGPEAAARVRIQYGGSVKPENMAAYMAQPDIDGALVGGASLDPTSFAAICAAAAEARAR.

9–11 (NWK) serves as a coordination point for substrate. The active-site Electrophile is the His95. The active-site Proton acceptor is the Glu167. Substrate-binding positions include Gly173, Ser213, and 234 to 235 (GG).

It belongs to the triosephosphate isomerase family. Homodimer.

Its subcellular location is the cytoplasm. The catalysed reaction is D-glyceraldehyde 3-phosphate = dihydroxyacetone phosphate. Its pathway is carbohydrate biosynthesis; gluconeogenesis. It participates in carbohydrate degradation; glycolysis; D-glyceraldehyde 3-phosphate from glycerone phosphate: step 1/1. In terms of biological role, involved in the gluconeogenesis. Catalyzes stereospecifically the conversion of dihydroxyacetone phosphate (DHAP) to D-glyceraldehyde-3-phosphate (G3P). The chain is Triosephosphate isomerase from Symbiobacterium thermophilum (strain DSM 24528 / JCM 14929 / IAM 14863 / T).